The primary structure comprises 587 residues: Barrierpepsin (587 aa).

Residues 1 to 24 (MSAINHLCLKLILASFAIINTITA) form the signal peptide. Positions 45–393 (YATTLDIGTP…DLDNYKISLA (349 aa)) constitute a Peptidase A1 domain. D63 is an active-site residue. 3 N-linked (GlcNAc...) asparagine glycosylation sites follow: N84, N90, and N268. D287 is a catalytic residue. N308 carries an N-linked (GlcNAc...) asparagine glycan. C322 and C358 are disulfide-bonded. N-linked (GlcNAc...) asparagine glycosylation is found at N366, N398, N468, N503, and N551. A disordered region spans residues 466–505 (SRNCSTKMPGTRSTTVLSKPTQNSAMHQSTGAVTQTSNET).

It belongs to the peptidase A1 family.

The protein localises to the secreted. It catalyses the reaction Selective cleavage of 6-Leu-|-Lys-7 bond in the pheromone alpha-mating factor.. Its function is as follows. This protein called 'barrier activity' is excreted by yeast cells mating type a. It is probably a protease that cleaves alpha-factor and thus acts as an antagonist of this mating pheromone and establishes optimal pheromone concentration for conjugation. This chain is Barrierpepsin (BAR1), found in Saccharomyces cerevisiae (strain ATCC 204508 / S288c) (Baker's yeast).